We begin with the raw amino-acid sequence, 102 residues long: Parathymosin (102 aa).

The segment at 1–102 is disordered; that stretch reads MSEKSVEAAA…RQKTENGASA (102 aa). Position 2 is an N-acetylserine (Ser2). Ser2 carries the phosphoserine modification. An N6-acetyllysine modification is found at Lys4. Phosphoserine occurs at positions 5 and 13. Basic and acidic residues predominate over residues 13-37; sequence SAKDLKEKKEKVEEKAGRKERKKEV. Residue Lys15 is modified to N6-acetyllysine. The span at 38-76 shows a compositional bias: acidic residues; that stretch reads VEEEENGAEEEEEETAEDGEEEDDGDEEDEEEEEEEDEG. Position 52 is a phosphothreonine (Thr52). Residue Lys92 is modified to N6-acetyllysine.

Belongs to the pro/parathymosin family.

Functionally, parathymosin may mediate immune function by blocking the effect of prothymosin alpha which confers resistance to certain opportunistic infections. The chain is Parathymosin (PTMS) from Bos taurus (Bovine).